The sequence spans 314 residues: Ribonuclease Z (314 aa).

Positions 61, 63, 65, 66, 137, 207, and 263 each coordinate Zn(2+). D65 serves as the catalytic Proton acceptor.

The protein belongs to the RNase Z family. As to quaternary structure, homodimer. Zn(2+) serves as cofactor.

The catalysed reaction is Endonucleolytic cleavage of RNA, removing extra 3' nucleotides from tRNA precursor, generating 3' termini of tRNAs. A 3'-hydroxy group is left at the tRNA terminus and a 5'-phosphoryl group is left at the trailer molecule.. Zinc phosphodiesterase, which displays some tRNA 3'-processing endonuclease activity. Probably involved in tRNA maturation, by removing a 3'-trailer from precursor tRNA. The sequence is that of Ribonuclease Z from Thermococcus gammatolerans (strain DSM 15229 / JCM 11827 / EJ3).